We begin with the raw amino-acid sequence, 181 residues long: MTGNENNLIWIDLEMTGLDPERDRIIEIATLVTDANLNILAEGPVIAVHQSDEQLGLMDDWNVRTHTGSGLVERVKASQYDDHAAELATIAFLQQWVPAGKSPICGNSVGQDRRFLFRYMPELEAYFHYRYLDVSTLKELARRWKPEILSGFKKQGTHQAMDDIRESVGELAYYREHFIQL.

Residues 8–171 (LIWIDLEMTG…DDIRESVGEL (164 aa)) enclose the Exonuclease domain. Tyr-129 is a catalytic residue.

Belongs to the oligoribonuclease family.

It is found in the cytoplasm. In terms of biological role, 3'-to-5' exoribonuclease specific for small oligoribonucleotides. The chain is Oligoribonuclease from Serratia proteamaculans (strain 568).